Here is a 242-residue protein sequence, read N- to C-terminus: DNA repair protein RecO (242 aa).

This sequence belongs to the RecO family.

Functionally, involved in DNA repair and RecF pathway recombination. The protein is DNA repair protein RecO of Methylococcus capsulatus (strain ATCC 33009 / NCIMB 11132 / Bath).